Reading from the N-terminus, the 142-residue chain is Transcriptional regulator MraZ (142 aa).

SpoVT-AbrB domains are found at residues 5-51 (ASSL…PRNE) and 77-120 (AMDV…DAAT).

This sequence belongs to the MraZ family. As to quaternary structure, forms oligomers.

It localises to the cytoplasm. The protein resides in the nucleoid. The polypeptide is Transcriptional regulator MraZ (Polaromonas sp. (strain JS666 / ATCC BAA-500)).